The following is a 199-amino-acid chain: Large ribosomal subunit protein mL51 (199 aa).

A mitochondrion-targeting transit peptide spans 1–15 (MNSNSLSRFTSIVRT).

Belongs to the mitochondrion-specific ribosomal protein mL51 family. As to quaternary structure, component of the mitochondrial ribosome large subunit (39S) which comprises a 16S rRNA and about 50 distinct proteins.

Its subcellular location is the mitochondrion. In Caenorhabditis elegans, this protein is Large ribosomal subunit protein mL51 (mrpl-51).